Consider the following 247-residue polypeptide: MIREQRSSRGGSRDQRTNRRIRAREVRVVGSDGSQLGVMPLEAALDRARTEGLDLVEISPMASPPVCKIMDYGKFKYEEKKKASEAKRAQVTVLLKEVKLRPKTEEHDYEFKVRNTRRFIEDGNKAKVVIQFRGREITHREQGTAILDDVAKDLKDVAVVEQMPRMEGRLMFMILAPTPKVAQKARELVRQAATAAKRPPPPGAPGAGKSAAGASSGAEEKAEETAEEKKEAQAAPAAAEAQSPTAS.

Disordered stretches follow at residues 1 to 20 (MIRE…TNRR) and 188 to 247 (LVRQ…PTAS). The interval 182–247 (AQKARELVRQ…AAEAQSPTAS (66 aa)) is needed for vegetative and developmental functions, but not for viability. Low complexity predominate over residues 207-217 (AGKSAAGASSG). Positions 218 to 232 (AEEKAEETAEEKKEA) are enriched in basic and acidic residues. Low complexity predominate over residues 233–247 (QAAPAAAEAQSPTAS).

The protein belongs to the IF-3 family. Monomer.

The protein localises to the cytoplasm. IF-3 binds to the 30S ribosomal subunit and shifts the equilibrium between 70S ribosomes and their 50S and 30S subunits in favor of the free subunits, thus enhancing the availability of 30S subunits on which protein synthesis initiation begins. In Myxococcus xanthus, this protein is Translation initiation factor IF-3.